The sequence spans 386 residues: MVYSSGSWRDAYKGMSSDNVKGLVLALSSSIFIGASFIVKKKGLKKAGASGLRAGSGGYSYLLEPLWWIGMITMIVGEIANFAAYAFAPAILVTPLGALSIIISASLAHIILQEKLHTFGILGCALCIVGSVTIVLHAPQEQDIVSVLEVWNLATEPAFLFYAAAVVGAAIVLIVQFIPLYGQSHVMVYIGVCSLIGSLSVMSVKALGIALKLTFSGTNQLGYPQTWVFTVIVLFCVITQMNYLNKALDTFNTAVVSPIYYVMFTSLTILASVIMFKDWDRQSGTQIMTELCGFVTILSGTFLLHTTTDMVDGESKGNLSSEEDSHLLLRIPKHSEDSNGFVQDGIILSLRRQESAKSPRPARQNKQLEDDLEAVPLRRQESSLRS.

Residues 1-18 (MVYSSGSWRDAYKGMSSD) lie on the Extracellular side of the membrane. The helical transmembrane segment at 19-39 (NVKGLVLALSSSIFIGASFIV) threads the bilayer. At 40 to 61 (KKKGLKKAGASGLRAGSGGYSY) the chain is on the cytoplasmic side. 2 helical membrane passes run 62–82 (LLEPLWWIGMITMIVGEIANF) and 83–103 (AAYAFAPAILVTPLGALSIII). At 104–115 (SASLAHIILQEK) the chain is on the cytoplasmic side. Residues 116 to 136 (LHTFGILGCALCIVGSVTIVL) traverse the membrane as a helical segment. At 137–157 (HAPQEQDIVSVLEVWNLATEP) the chain is on the extracellular side. Residues 158–178 (AFLFYAAAVVGAAIVLIVQFI) traverse the membrane as a helical segment. Residues 179–189 (PLYGQSHVMVY) lie on the Cytoplasmic side of the membrane. Residues 190–210 (IGVCSLIGSLSVMSVKALGIA) traverse the membrane as a helical segment. Over 211 to 220 (LKLTFSGTNQ) the chain is Extracellular. The helical transmembrane segment at 221–241 (LGYPQTWVFTVIVLFCVITQM) threads the bilayer. Topologically, residues 242–255 (NYLNKALDTFNTAV) are cytoplasmic. Residues 256 to 276 (VSPIYYVMFTSLTILASVIMF) form a helical membrane-spanning segment. Residues 277–283 (KDWDRQS) are Extracellular-facing. A helical membrane pass occupies residues 284–304 (GTQIMTELCGFVTILSGTFLL). The Cytoplasmic portion of the chain corresponds to 305–386 (HTTTDMVDGE…LRRQESSLRS (82 aa)). Residues 352–386 (RQESAKSPRPARQNKQLEDDLEAVPLRRQESSLRS) are disordered. A compositionally biased stretch (basic and acidic residues) spans 376–386 (PLRRQESSLRS).

It belongs to the NIPA (TC 2.A.7) family. As to quaternary structure, homodimer.

The protein localises to the cell membrane. Its subcellular location is the early endosome. In terms of biological role, acts as a Mg(2+) transporter. Can also transport other divalent cations such as Fe(2+), Sr(2+), Ba(2+), Mn(2+) and Co(2+) but to a much less extent than Mg(2+). This is Probable magnesium transporter NIPA5 from Arabidopsis thaliana (Mouse-ear cress).